Here is a 452-residue protein sequence, read N- to C-terminus: Protein disulfide-isomerase TMX3 (452 aa).

An N-terminal signal peptide occupies residues 1 to 26; sequence MAAAGLCFILAIVSSTSLLASVPVSA. The region spanning 27 to 128 is the Thioredoxin domain; the sequence is LVEDLDDSFK…KEDIVEFANR (102 aa). The Lumenal segment spans residues 27-375; that stretch reads LVEDLDDSFK…TVVSVFKSSP (349 aa). Active-site nucleophile residues include cysteine 53 and cysteine 56. Cysteine 53 and cysteine 56 form a disulfide bridge. Asparagine 258 and asparagine 313 each carry an N-linked (GlcNAc...) asparagine glycan. The chain crosses the membrane as a helical span at residues 376–396; the sequence is LLGCFLFGLPLGVISIMCYGI. The Cytoplasmic segment spans residues 397–452; that stretch reads CTADTEDGSEEMTRKDVIDQNASDEGSDEEEEKGREITDVSDEDQQEKDFMEKKID. The segment at 405–452 is disordered; it reads SEEMTRKDVIDQNASDEGSDEEEEKGREITDVSDEDQQEKDFMEKKID. Over residues 443–452 the composition is skewed to basic and acidic residues; the sequence is EKDFMEKKID. The Di-lysine motif signature appears at 449–452; sequence KKID.

This sequence belongs to the protein disulfide isomerase family.

Its subcellular location is the endoplasmic reticulum membrane. The catalysed reaction is Catalyzes the rearrangement of -S-S- bonds in proteins.. Probable disulfide isomerase, which participates in the folding of proteins containing disulfide bonds. May act as a dithiol oxidase. Acts as a regulator of endoplasmic reticulum-mitochondria contact sites via its ability to regulate redox signals. In Xenopus laevis (African clawed frog), this protein is Protein disulfide-isomerase TMX3 (tmx3).